The chain runs to 279 residues: Bifunctional protein FolD (279 aa).

NADP(+) contacts are provided by residues 165–167 (GRS), Ser190, and Ile231.

This sequence belongs to the tetrahydrofolate dehydrogenase/cyclohydrolase family. As to quaternary structure, homodimer.

It carries out the reaction (6R)-5,10-methylene-5,6,7,8-tetrahydrofolate + NADP(+) = (6R)-5,10-methenyltetrahydrofolate + NADPH. The enzyme catalyses (6R)-5,10-methenyltetrahydrofolate + H2O = (6R)-10-formyltetrahydrofolate + H(+). It participates in one-carbon metabolism; tetrahydrofolate interconversion. In terms of biological role, catalyzes the oxidation of 5,10-methylenetetrahydrofolate to 5,10-methenyltetrahydrofolate and then the hydrolysis of 5,10-methenyltetrahydrofolate to 10-formyltetrahydrofolate. This is Bifunctional protein FolD from Halalkalibacterium halodurans (strain ATCC BAA-125 / DSM 18197 / FERM 7344 / JCM 9153 / C-125) (Bacillus halodurans).